Consider the following 872-residue polypeptide: Alanine--tRNA ligase (872 aa).

Residues histidine 567, histidine 571, cysteine 669, and histidine 673 each coordinate Zn(2+).

Belongs to the class-II aminoacyl-tRNA synthetase family. Requires Zn(2+) as cofactor.

The protein localises to the cytoplasm. It carries out the reaction tRNA(Ala) + L-alanine + ATP = L-alanyl-tRNA(Ala) + AMP + diphosphate. Functionally, catalyzes the attachment of alanine to tRNA(Ala) in a two-step reaction: alanine is first activated by ATP to form Ala-AMP and then transferred to the acceptor end of tRNA(Ala). Also edits incorrectly charged Ser-tRNA(Ala) and Gly-tRNA(Ala) via its editing domain. The protein is Alanine--tRNA ligase of Streptococcus pyogenes serotype M4 (strain MGAS10750).